Here is a 271-residue protein sequence, read N- to C-terminus: Mannosyl-3-phosphoglycerate phosphatase (271 aa).

Catalysis depends on Asp13, which acts as the Nucleophile. The Mg(2+) site is built by Asp13, Asp15, and Asp214.

This sequence belongs to the HAD-like hydrolase superfamily. MPGP family. It depends on Mg(2+) as a cofactor.

The protein localises to the cytoplasm. The catalysed reaction is 2-O-(alpha-D-mannosyl)-3-phosphoglycerate + H2O = (2R)-2-O-(alpha-D-mannosyl)-glycerate + phosphate. This chain is Mannosyl-3-phosphoglycerate phosphatase (yedP), found in Shigella dysenteriae serotype 1 (strain Sd197).